The following is a 208-amino-acid chain: 2-phospho-L-lactate guanylyltransferase (208 aa).

It belongs to the CofC family. As to quaternary structure, homodimer.

The enzyme catalyses (2S)-2-phospholactate + GTP + H(+) = (2S)-lactyl-2-diphospho-5'-guanosine + diphosphate. The protein operates within cofactor biosynthesis; coenzyme F420 biosynthesis. Its function is as follows. Guanylyltransferase that catalyzes the activation of (2S)-2-phospholactate (2-PL) as (2S)-lactyl-2-diphospho-5'-guanosine, via the condensation of 2-PL with GTP. It is involved in the biosynthesis of coenzyme F420, a hydride carrier cofactor. The sequence is that of 2-phospho-L-lactate guanylyltransferase from Methanosarcina mazei (strain ATCC BAA-159 / DSM 3647 / Goe1 / Go1 / JCM 11833 / OCM 88) (Methanosarcina frisia).